The primary structure comprises 205 residues: Protein phosphatase inhibitor 2 (205 aa).

A disordered region spans residues 1–44; sequence MAASTASHRPIKGILKNKTSTTSSVVASAEQPRRTVEEELSKKS. The residue at position 2 (A2) is an N-acetylalanine. Residues 12–17 are required for binding PPP1CC; it reads KGILKN. Low complexity predominate over residues 19–29; it reads TSTTSSVVASA. Residues 31–44 show a composition bias toward basic and acidic residues; sequence QPRRTVEEELSKKS. A required for binding PPP1CC region spans residues 43 to 55; that stretch reads KSQKWDEMNILAT. Position 44 is a phosphoserine; by ATM (S44). T73 is subject to Phosphothreonine; by GSK3. A phosphoserine mark is found at S87 and S89. Phosphothreonine occurs at positions 96 and 116. The tract at residues 104–142 is disordered; it reads LAAAEGSEPKFRTREQESSGEEDNDLSPEEREKKRQFEM. Basic and acidic residues predominate over residues 110–120; it reads SEPKFRTREQE. Phosphoserine occurs at positions 121, 122, and 130. Acidic residues predominate over residues 121–130; that stretch reads SSGEEDNDLS. The segment covering 131 to 142 has biased composition (basic and acidic residues); that stretch reads PEEREKKRQFEM. A required for binding PPP1CC catalytic center, displacing metal ions and inhibition of PPP1CC catalytic activity region spans residues 147-150; the sequence is HYNE. Positions 163-205 are disordered; it reads KDLHDDDEDEEMSETADADSMNIEESNQGSTAGDHLQHKSQSS. Residues 167-179 are compositionally biased toward acidic residues; sequence DDDEDEEMSETAD.

It belongs to the protein phosphatase inhibitor 2 family. As to quaternary structure, heterodimer with PP1. Post-translationally, phosphorylation on Ser-44 by ATM activates PP1 by dissociating the PP1-PPP1R2 complex. Phosphorylation on Thr-73 by GSK3 activates PP1 by dissociating the PP1-PPP1R2 complex. Central nervous system.

Functionally, inhibitor of protein-phosphatase 1. The protein is Protein phosphatase inhibitor 2 (Ppp1r2) of Rattus norvegicus (Rat).